The primary structure comprises 381 residues: Homoserine O-succinyltransferase (381 aa).

The region spanning 45-360 (NAVLVCHALN…PHGHDAFLLD (316 aa)) is the AB hydrolase-1 domain. S151 functions as the Nucleophile in the catalytic mechanism. R221 serves as a coordination point for substrate. Residues D321 and H354 contribute to the active site. A substrate-binding site is contributed by D355.

It belongs to the AB hydrolase superfamily. MetX family. Homodimer.

It is found in the cytoplasm. The catalysed reaction is L-homoserine + succinyl-CoA = O-succinyl-L-homoserine + CoA. Its pathway is amino-acid biosynthesis; L-methionine biosynthesis via de novo pathway; O-succinyl-L-homoserine from L-homoserine: step 1/1. Transfers a succinyl group from succinyl-CoA to L-homoserine, forming succinyl-L-homoserine. The sequence is that of Homoserine O-succinyltransferase from Paraburkholderia phytofirmans (strain DSM 17436 / LMG 22146 / PsJN) (Burkholderia phytofirmans).